A 105-amino-acid chain; its full sequence is MICOS complex subunit Mic10 (105 aa).

The helical transmembrane segment at L29 to F46 threads the bilayer. Over F47–Q105 the chain is Mitochondrial intermembrane. The disordered stretch occupies residues P85–Q105.

Belongs to the MICOS complex subunit Mic10 family. In terms of assembly, component of the mitochondrial contact site and cristae organizing system (MICOS) complex.

It is found in the mitochondrion inner membrane. Its function is as follows. Component of the MICOS complex, a large protein complex of the mitochondrial inner membrane that plays crucial roles in the maintenance of crista junctions, inner membrane architecture, and formation of contact sites to the outer membrane. The sequence is that of MICOS complex subunit Mic10 from Caenorhabditis elegans.